We begin with the raw amino-acid sequence, 69 residues long: MKAKEIRDLTTSEIEEQIKSSKEELFNLRFQLATGQLEETARIRTVRKTIARLKTVAREREIEQGKANQ.

Belongs to the universal ribosomal protein uL29 family.

The sequence is that of Large ribosomal subunit protein uL29 from Staphylococcus saprophyticus subsp. saprophyticus (strain ATCC 15305 / DSM 20229 / NCIMB 8711 / NCTC 7292 / S-41).